The chain runs to 639 residues: Protein artemis (639 aa).

Disordered stretches follow at residues 450–496 (MDCT…LTSS), 515–570 (SELE…SQVD), and 590–617 (EAAE…VPQP). Residues 454-466 (ESNDDDDDEDDAA) show a composition bias toward acidic residues. Over residues 518–537 (ENSQNTQTLSTENTASQSPE) the composition is skewed to polar residues. Over residues 548-560 (VHMSSSQSTHISD) the composition is skewed to low complexity.

This sequence belongs to the DNA repair metallo-beta-lactamase (DRMBL) family.

Its subcellular location is the nucleus. Functionally, may have a role in the processing of DNA double strand breaks (DSBs) prior to their repair by the non homologous end joining (NHEJ) pathway. Probably exhibits both exonuclease and endonuclease activity. In Danio rerio (Zebrafish), this protein is Protein artemis (dclre1c).